A 943-amino-acid polypeptide reads, in one-letter code: Protein translocase subunit SecA (943 aa).

ATP is bound by residues Gln90, Gly108–Thr112, and Asp509. Residues Lys534–Ser561 are disordered.

It belongs to the SecA family. Monomer and homodimer. Part of the essential Sec protein translocation apparatus which comprises SecA, SecYEG and auxiliary proteins SecDF. Other proteins may also be involved.

It localises to the cell inner membrane. It is found in the cellular thylakoid membrane. The protein localises to the cytoplasm. The enzyme catalyses ATP + H2O + cellular proteinSide 1 = ADP + phosphate + cellular proteinSide 2.. Its function is as follows. Part of the Sec protein translocase complex. Interacts with the SecYEG preprotein conducting channel. Has a central role in coupling the hydrolysis of ATP to the transfer of proteins into and across the cell membrane, serving as an ATP-driven molecular motor driving the stepwise translocation of polypeptide chains across the membrane. In terms of biological role, probably participates in protein translocation into and across both the cytoplasmic and thylakoid membranes in cyanobacterial cells. This chain is Protein translocase subunit SecA, found in Prochlorococcus marinus subsp. pastoris (strain CCMP1986 / NIES-2087 / MED4).